The sequence spans 364 residues: Protein BRI1-5 ENHANCED 1 (364 aa).

Residues 1-11 (MVREEQEEDDN) show a composition bias toward acidic residues. Residues 1 to 22 (MVREEQEEDDNNNNNNGGGERK) form a disordered region. NADP(+)-binding positions include 44-49 (GGSGFV), R69, 98-99 (DL), Y202, K206, V232, and S244. Residue K206 is the Proton donor of the active site.

The protein belongs to the NAD(P)-dependent epimerase/dehydratase family. As to quaternary structure, monomer. Mainly present in cell elongating-containing tissues. Strongly expressed in roots and flowers, also observed in petioles, stems, leaves and siliques.

Its subcellular location is the cytoplasm. Its pathway is plant hormone biosynthesis; brassinosteroid biosynthesis. Its function is as follows. Element of the brassinosteroid metabolic pathway that regulates typhasterol (TY), castasterone (CS) and brassinolide (BL) levels. Involved in the control of organ elongation. The polypeptide is Protein BRI1-5 ENHANCED 1 (Arabidopsis thaliana (Mouse-ear cress)).